Reading from the N-terminus, the 234-residue chain is 1-(5-phosphoribosyl)-5-[(5-phosphoribosylamino)methylideneamino] imidazole-4-carboxamide isomerase (234 aa).

The Proton acceptor role is filled by Asp9. The active-site Proton donor is the Asp131.

This sequence belongs to the HisA/HisF family.

The protein localises to the cytoplasm. It catalyses the reaction 1-(5-phospho-beta-D-ribosyl)-5-[(5-phospho-beta-D-ribosylamino)methylideneamino]imidazole-4-carboxamide = 5-[(5-phospho-1-deoxy-D-ribulos-1-ylimino)methylamino]-1-(5-phospho-beta-D-ribosyl)imidazole-4-carboxamide. The protein operates within amino-acid biosynthesis; L-histidine biosynthesis; L-histidine from 5-phospho-alpha-D-ribose 1-diphosphate: step 4/9. In Staphylococcus carnosus (strain TM300), this protein is 1-(5-phosphoribosyl)-5-[(5-phosphoribosylamino)methylideneamino] imidazole-4-carboxamide isomerase.